The chain runs to 152 residues: Ribosome maturation factor RimP (152 aa).

It belongs to the RimP family.

Its subcellular location is the cytoplasm. Its function is as follows. Required for maturation of 30S ribosomal subunits. This is Ribosome maturation factor RimP from Burkholderia cenocepacia (strain ATCC BAA-245 / DSM 16553 / LMG 16656 / NCTC 13227 / J2315 / CF5610) (Burkholderia cepacia (strain J2315)).